We begin with the raw amino-acid sequence, 321 residues long: Lipoyl synthase (321 aa).

[4Fe-4S] cluster-binding residues include Cys-68, Cys-73, Cys-79, Cys-94, Cys-98, Cys-101, and Ser-308. A Radical SAM core domain is found at 80–297; it reads FNHGTATFMI…KAEALAMGFT (218 aa).

It belongs to the radical SAM superfamily. Lipoyl synthase family. The cofactor is [4Fe-4S] cluster.

The protein resides in the cytoplasm. The enzyme catalyses [[Fe-S] cluster scaffold protein carrying a second [4Fe-4S](2+) cluster] + N(6)-octanoyl-L-lysyl-[protein] + 2 oxidized [2Fe-2S]-[ferredoxin] + 2 S-adenosyl-L-methionine + 4 H(+) = [[Fe-S] cluster scaffold protein] + N(6)-[(R)-dihydrolipoyl]-L-lysyl-[protein] + 4 Fe(3+) + 2 hydrogen sulfide + 2 5'-deoxyadenosine + 2 L-methionine + 2 reduced [2Fe-2S]-[ferredoxin]. It functions in the pathway protein modification; protein lipoylation via endogenous pathway; protein N(6)-(lipoyl)lysine from octanoyl-[acyl-carrier-protein]: step 2/2. Its function is as follows. Catalyzes the radical-mediated insertion of two sulfur atoms into the C-6 and C-8 positions of the octanoyl moiety bound to the lipoyl domains of lipoate-dependent enzymes, thereby converting the octanoylated domains into lipoylated derivatives. In Escherichia fergusonii (strain ATCC 35469 / DSM 13698 / CCUG 18766 / IAM 14443 / JCM 21226 / LMG 7866 / NBRC 102419 / NCTC 12128 / CDC 0568-73), this protein is Lipoyl synthase.